We begin with the raw amino-acid sequence, 1059 residues long: Microtubule-associated protein 1S (1059 aa).

The interval 1-797 (MAAVAGSGAA…SESLPTLSDS (797 aa)) is necessary for the microtubule-organizing center localization. A phosphoserine mark is found at S321 and S472. 2 disordered regions span residues 461 to 733 (PQDL…ASPH) and 751 to 942 (VPMA…SATP). 2 stretches are compositionally biased toward basic and acidic residues: residues 466 to 486 (GPGR…KREG) and 494 to 530 (PGQE…KDPK). Residues 547–557 (SVPNLKKTNAQ) are compositionally biased toward polar residues. S582 carries the phosphoserine modification. Positions 591 to 603 (ASPPSAACGSPAS) are enriched in low complexity. T638 carries the post-translational modification Phosphothreonine. S640 is modified (phosphoserine). Residues 642 to 652 (ESHRSPAEGSE) are compositionally biased toward basic and acidic residues. A phosphoserine mark is found at S655 and S657. The interval 666-1059 (PDASPTVTTP…DAFPACKVEF (394 aa)) is necessary for interaction with RASSF1 isoform A and isoform C. Over residues 670–680 (PTVTTPTVTTP) the composition is skewed to low complexity. The tract at residues 714 to 966 (EAGLSLPLRG…GSSAHLVDEE (253 aa)) is necessary for association with microtubules. Phosphoserine occurs at positions 731 and 759. Over residues 759 to 769 (SPGSSNDSSAR) the composition is skewed to low complexity. The span at 783 to 796 (PPTSVSESLPTLSD) shows a compositional bias: polar residues. Position 809 is a phosphoserine (S809). Positions 825–836 (PDPLKVPPPLPD) are enriched in pro residues. 2 stretches are compositionally biased toward low complexity: residues 873 to 887 (AAAP…AKTK) and 923 to 936 (TATR…SSRP). Positions 960 to 1059 (AHLVDEEFFQ…DAFPACKVEF (100 aa)) are necessary for association with actin. The interval 967-991 (FFQRVRALCYVISGQDQRKEEGMRA) is necessary for the mitochondrial aggregation and genome destruction.

It belongs to the MAP1 family. In terms of assembly, heterodimer of a heavy and a light chain. Interacts with microtubules and actin. Both MAP1S heavy and light chains interact with microtubules. MAP1S light chain interacts with actin. Interacts (via C-terminus) with GAN (via Kelch domains). Interacts with ESR1, LRPPRC, RASSF1 isoform A and isoform C, microtubules and VCY2. Interacts with WDR47 (via N-terminus of light chain). In terms of tissue distribution, expressed in neurons (at protein level). Expressed in spermatocytes, spermatids and spermatozoa. Expressed in the cerebral cortex. Highly expressed in testis. Moderately expressed in the brain, colon, heart, kidney, liver, lung, placenta, small intestine, spleen and stomach. Weakly expressed in muscle.

Its subcellular location is the nucleus. It is found in the cytoplasm. The protein resides in the cytosol. It localises to the cytoskeleton. The protein localises to the spindle. Its function is as follows. Microtubule-associated protein that mediates aggregation of mitochondria resulting in cell death and genomic destruction (MAGD). Plays a role in anchoring the microtubule organizing center to the centrosomes. Binds to DNA. Plays a role in apoptosis. Involved in the formation of microtubule bundles. The protein is Microtubule-associated protein 1S (MAP1S) of Homo sapiens (Human).